The following is a 374-amino-acid chain: Type IV secretion system protein PtlG homolog (374 aa).

A helical membrane pass occupies residues 38 to 56 (WMFALVAVALSCLLATGIW). The tract at residues 87–116 (PREPEPAPLPDMPAAPNPILPQPRPAPPVP) is disordered. Positions 92–116 (PAPLPDMPAAPNPILPQPRPAPPVP) are enriched in pro residues.

Belongs to the TrbI/VirB10 family.

Its subcellular location is the cell membrane. The sequence is that of Type IV secretion system protein PtlG homolog (ptlG) from Bordetella parapertussis (strain 12822 / ATCC BAA-587 / NCTC 13253).